The chain runs to 271 residues: Formamidopyrimidine-DNA glycosylase (271 aa).

Catalysis depends on Pro2, which acts as the Schiff-base intermediate with DNA. Glu3 serves as the catalytic Proton donor. Catalysis depends on Lys58, which acts as the Proton donor; for beta-elimination activity. DNA contacts are provided by His92, Arg111, and Arg152. The FPG-type zinc finger occupies 237 to 271 (MVYGREGEACRHCGGELKHATIGQRATVWCAACQR). The Proton donor; for delta-elimination activity role is filled by Arg261.

Belongs to the FPG family. In terms of assembly, monomer. Zn(2+) serves as cofactor.

It carries out the reaction Hydrolysis of DNA containing ring-opened 7-methylguanine residues, releasing 2,6-diamino-4-hydroxy-5-(N-methyl)formamidopyrimidine.. The enzyme catalyses 2'-deoxyribonucleotide-(2'-deoxyribose 5'-phosphate)-2'-deoxyribonucleotide-DNA = a 3'-end 2'-deoxyribonucleotide-(2,3-dehydro-2,3-deoxyribose 5'-phosphate)-DNA + a 5'-end 5'-phospho-2'-deoxyribonucleoside-DNA + H(+). Involved in base excision repair of DNA damaged by oxidation or by mutagenic agents. Acts as a DNA glycosylase that recognizes and removes damaged bases. Has a preference for oxidized purines, such as 7,8-dihydro-8-oxoguanine (8-oxoG). Has AP (apurinic/apyrimidinic) lyase activity and introduces nicks in the DNA strand. Cleaves the DNA backbone by beta-delta elimination to generate a single-strand break at the site of the removed base with both 3'- and 5'-phosphates. This is Formamidopyrimidine-DNA glycosylase from Xanthomonas campestris pv. campestris (strain ATCC 33913 / DSM 3586 / NCPPB 528 / LMG 568 / P 25).